We begin with the raw amino-acid sequence, 330 residues long: Pseudouridine-5'-phosphate glycosidase (330 aa).

E50 functions as the Proton donor in the catalytic mechanism. Residues K112 and V132 each contribute to the substrate site. Mn(2+) is bound at residue D164. Residue 166–168 participates in substrate binding; sequence SSD. K185 acts as the Nucleophile in catalysis.

It belongs to the pseudouridine-5'-phosphate glycosidase family. In terms of assembly, homotrimer. Requires Mn(2+) as cofactor.

The protein localises to the peroxisome. It catalyses the reaction D-ribose 5-phosphate + uracil = psi-UMP + H2O. Catalyzes the reversible cleavage of pseudouridine 5'-phosphate (PsiMP) to ribose 5-phosphate and uracil. Functions biologically in the cleavage direction, as part of a pseudouridine degradation pathway. Acts together with the pseudouridine kinase PUKI in the peroxisome to prevent toxic pseudouridine monophosphate accumulation. Can catalyze the formation of pseudouridine 5'-phosphate (reverse reaction) in vitro, with a catalytic efficiency 4 times lower than the hydrolysis reaction. This chain is Pseudouridine-5'-phosphate glycosidase, found in Arabidopsis thaliana (Mouse-ear cress).